The following is a 319-amino-acid chain: Homoserine kinase (319 aa).

Residue P100 to S110 participates in ATP binding.

It belongs to the GHMP kinase family. Homoserine kinase subfamily.

Its subcellular location is the cytoplasm. The catalysed reaction is L-homoserine + ATP = O-phospho-L-homoserine + ADP + H(+). It functions in the pathway amino-acid biosynthesis; L-threonine biosynthesis; L-threonine from L-aspartate: step 4/5. Functionally, catalyzes the ATP-dependent phosphorylation of L-homoserine to L-homoserine phosphate. This Chloroherpeton thalassium (strain ATCC 35110 / GB-78) protein is Homoserine kinase.